The chain runs to 246 residues: tRNA (guanine-N(1)-)-methyltransferase (246 aa).

Residues Gly114 and 133–138 (LGDYVL) each bind S-adenosyl-L-methionine.

Belongs to the RNA methyltransferase TrmD family. As to quaternary structure, homodimer.

The protein resides in the cytoplasm. The catalysed reaction is guanosine(37) in tRNA + S-adenosyl-L-methionine = N(1)-methylguanosine(37) in tRNA + S-adenosyl-L-homocysteine + H(+). Functionally, specifically methylates guanosine-37 in various tRNAs. The chain is tRNA (guanine-N(1)-)-methyltransferase from Enterococcus faecalis (strain ATCC 700802 / V583).